Reading from the N-terminus, the 1401-residue chain is DNA-directed RNA polymerase subunit beta' (1401 aa).

Zn(2+)-binding residues include cysteine 71, cysteine 73, cysteine 86, and cysteine 89. 3 residues coordinate Mg(2+): aspartate 462, aspartate 464, and aspartate 466. Residues cysteine 810, cysteine 884, cysteine 891, and cysteine 894 each contribute to the Zn(2+) site. The tract at residues 1377 to 1401 (RRKGTGAESATPMLADMANDPAAAE) is disordered.

This sequence belongs to the RNA polymerase beta' chain family. In terms of assembly, the RNAP catalytic core consists of 2 alpha, 1 beta, 1 beta' and 1 omega subunit. When a sigma factor is associated with the core the holoenzyme is formed, which can initiate transcription. It depends on Mg(2+) as a cofactor. Requires Zn(2+) as cofactor.

It carries out the reaction RNA(n) + a ribonucleoside 5'-triphosphate = RNA(n+1) + diphosphate. In terms of biological role, DNA-dependent RNA polymerase catalyzes the transcription of DNA into RNA using the four ribonucleoside triphosphates as substrates. The polypeptide is DNA-directed RNA polymerase subunit beta' (Rhizobium meliloti (strain 1021) (Ensifer meliloti)).